The following is a 98-amino-acid chain: Gibberellin-regulated protein 1 (98 aa).

The first 23 residues, 1–23, serve as a signal peptide directing secretion; the sequence is MAISKALIASLLISLLVLQLVQA.

It belongs to the GASA family. In terms of processing, six disulfide bonds may be present. In terms of tissue distribution, expressed in flower buds, style, stamen filaments, vasculature of sepals, flower abscission zone and green siliques. Lower levels seen in the root phloem, cotyledons and vasculature of rosette leaves.

Its subcellular location is the secreted. Its function is as follows. Gibberellin-regulated protein that may function in hormonal controlled steps of development such as seed germination, flowering and seed maturation. The chain is Gibberellin-regulated protein 1 (GASA1) from Arabidopsis thaliana (Mouse-ear cress).